The primary structure comprises 892 residues: Alanine--tRNA ligase (892 aa).

Zn(2+) is bound by residues His-594, His-598, Cys-702, and His-706.

This sequence belongs to the class-II aminoacyl-tRNA synthetase family. It depends on Zn(2+) as a cofactor.

The protein resides in the cytoplasm. The catalysed reaction is tRNA(Ala) + L-alanine + ATP = L-alanyl-tRNA(Ala) + AMP + diphosphate. Its function is as follows. Catalyzes the attachment of alanine to tRNA(Ala) in a two-step reaction: alanine is first activated by ATP to form Ala-AMP and then transferred to the acceptor end of tRNA(Ala). Also edits incorrectly charged Ser-tRNA(Ala) and Gly-tRNA(Ala) via its editing domain. This is Alanine--tRNA ligase from Pyrobaculum neutrophilum (strain DSM 2338 / JCM 9278 / NBRC 100436 / V24Sta) (Thermoproteus neutrophilus).